The primary structure comprises 24 residues: Fibrinogen gamma chain (24 aa).

In terms of assembly, heterohexamer; disulfide linked. Contains 2 sets of 3 non-identical chains (alpha, beta and gamma). The 2 heterotrimers are in head to head conformation with the N-termini in a small central domain. Post-translationally, conversion of fibrinogen to fibrin is triggered by thrombin, which cleaves fibrinopeptides A and B from alpha and beta chains, and thus exposes the N-terminal polymerization sites responsible for the formation of the soft clot. The soft clot is converted into the hard clot by factor XIIIA which catalyzes the epsilon-(gamma-glutamyl)lysine cross-linking between gamma chains (stronger) and between alpha chains (weaker) of different monomers.

It localises to the secreted. Functionally, together with fibrinogen alpha (FGA) and fibrinogen beta (FGB), polymerizes to form an insoluble fibrin matrix. Has a major function in hemostasis as one of the primary components of blood clots. In addition, functions during the early stages of wound repair to stabilize the lesion and guide cell migration during re-epithelialization. Was originally thought to be essential for platelet aggregation, based on in vitro studies using anticoagulated blood. However, subsequent studies have shown that it is not absolutely required for thrombus formation in vivo. Enhances expression of SELP in activated platelets via an ITGB3-dependent pathway. Maternal fibrinogen is essential for successful pregnancy. Fibrin deposition is also associated with infection, where it protects against IFNG-mediated hemorrhage. May also facilitate the antibacterial immune response via both innate and T-cell mediated pathways. The polypeptide is Fibrinogen gamma chain (FGG) (Canis lupus familiaris (Dog)).